The chain runs to 142 residues: HTH-type transcriptional regulator MntR (142 aa).

The region spanning 1–63 is the HTH dtxR-type domain; that stretch reads MPTPSMEDYI…YEKYRGLVLT (63 aa). Residues Asp8, Glu11, His77, Glu99, Glu102, and His103 each coordinate Mn(2+).

It belongs to the DtxR/MntR family. In terms of assembly, homodimer.

Its subcellular location is the cytoplasm. DNA binding is strongly activated by Mn(2+). Central regulator of manganese homeostasis. The polypeptide is HTH-type transcriptional regulator MntR (Bacillus cereus (strain AH820)).